The following is a 387-amino-acid chain: Putative actin-29 (387 aa).

This sequence belongs to the actin family.

It is found in the cytoplasm. The protein localises to the cytoskeleton. The enzyme catalyses ATP + H2O = ADP + phosphate + H(+). Actins are highly conserved proteins that are involved in various types of cell motility and are ubiquitously expressed in all eukaryotic cells. Multiple isoforms are involved in various cellular functions such as cytoskeleton structure, cell mobility, chromosome movement and muscle contraction. This is Putative actin-29 (act29) from Dictyostelium discoideum (Social amoeba).